The primary structure comprises 356 residues: Glutamine synthetase (356 aa).

One can recognise a GS beta-grasp domain in the interval valine 19–glycine 99. The 251-residue stretch at lysine 106–proline 356 folds into the GS catalytic domain.

The protein belongs to the glutamine synthetase family. In terms of assembly, homooctamer. Found at highest levels in root nodules.

It localises to the cytoplasm. The enzyme catalyses L-glutamate + NH4(+) + ATP = L-glutamine + ADP + phosphate + H(+). The chain is Glutamine synthetase (GLN1) from Alnus glutinosa (European alder).